We begin with the raw amino-acid sequence, 149 residues long: Calmodulin-5/6/7/8 (149 aa).

Ala-2 is modified (N-acetylalanine). 4 consecutive EF-hand domains span residues Asp-8–Asn-43, Pro-44–Asp-79, Asp-81–Lys-116, and Leu-117–Lys-149. 14 residues coordinate Ca(2+): Asp-21, Asp-23, Asp-25, Cys-27, Glu-32, Asp-57, Asp-59, Asn-61, Thr-63, Glu-68, Asp-94, Asp-96, Asn-98, and Glu-105. At Lys-116 the chain carries N6,N6,N6-trimethyllysine. Residues Asp-130, Asp-132, Asp-134, Gln-136, and Glu-141 each coordinate Ca(2+).

This sequence belongs to the calmodulin family. In terms of tissue distribution, high expression of PCM5 and 8 in stolon tips and stems, moderate in roots, and low in leaves. Steady-state expression of PCM6 in all the tissues tested, except in the leaves where the expression is lower.

Its function is as follows. Calmodulin mediates the control of a large number of enzymes, ion channels and other proteins by Ca(2+). Among the enzymes to be stimulated by the calmodulin-Ca(2+) complex are a number of protein kinases and phosphatases. This is Calmodulin-5/6/7/8 (PCM5) from Solanum tuberosum (Potato).